The sequence spans 4540 residues: Dynein heavy chain, cytoplasmic (4540 aa).

The stem stretch occupies residues 1–1796 (MEESETQLNV…LIQMGNAQFH (1796 aa)). Coiled-coil stretches lie at residues 440 to 482 (EHIK…NVQQ), 698 to 722 (RVNY…KTKV), 794 to 827 (VKKF…AMKT), 975 to 995 (QQLI…MEQY), 1169 to 1251 (RSKK…LKMD), and 1295 to 1311 (QNKK…KQLN). 4 AAA regions span residues 1797–2018 (YGFE…VLNS), 2091–2348 (KELA…FTRI), 2457–2705 (EIDP…WKYA), and 2796–3056 (QFNE…AKRF). Residues 1835–1842 (GPAGTGKT), 2129–2136 (GPCGCGKS), 2496–2503 (GPPGSGKT), and 2834–2841 (GSSGVGKT) each bind ATP. Coiled-coil stretches lie at residues 3076 to 3182 (NEKK…NAKQ), 3289 to 3367 (QLKY…RSQA), 3653 to 3688 (EDEK…VMNT), and 3820 to 3851 (QQLK…RWLN). Positions 3076 to 3367 (NEKKSQLEDQ…VQEKVTRSQA (292 aa)) are stalk. The interval 3140–3159 (KKKEDSTRLSSDAEKKAKEM) is disordered. Residues 3444-3673 (LSRPSDRLNW…LKKEAAVIVQ (230 aa)) form an AAA 5 region. The AAA 6 stretch occupies residues 3908-4123 (ARKLINQILG…QRCSLDLIDE (216 aa)). Coiled-coil stretches lie at residues 4238-4259 (QKLI…TQIE) and 4313-4342 (RFLD…LAQG).

Belongs to the dynein heavy chain family. In terms of assembly, consists of at least two heavy chains and a number of intermediate and light chains.

It localises to the cytoplasm. Its subcellular location is the cytoskeleton. In terms of biological role, cytoplasmic dynein acts as a motor for the intracellular retrograde motility of vesicles and organelles along microtubules. Dynein has ATPase activity; the force-producing power stroke is thought to occur on release of ADP. The protein is Dynein heavy chain, cytoplasmic (DHC-8) of Paramecium tetraurelia.